The following is a 427-amino-acid chain: Glutamyl-tRNA reductase (427 aa).

Substrate is bound by residues 49-52 (TCNR), Ser101, 106-108 (EPQ), and Gln112. Cys50 acts as the Nucleophile in catalysis. Position 181-186 (181-186 (GAGETI)) interacts with NADP(+). The interval 407-427 (FPATPGYRHPPVRPDDADPAP) is disordered. The span at 418–427 (VRPDDADPAP) shows a compositional bias: basic and acidic residues.

This sequence belongs to the glutamyl-tRNA reductase family. Homodimer.

It catalyses the reaction (S)-4-amino-5-oxopentanoate + tRNA(Glu) + NADP(+) = L-glutamyl-tRNA(Glu) + NADPH + H(+). It functions in the pathway porphyrin-containing compound metabolism; protoporphyrin-IX biosynthesis; 5-aminolevulinate from L-glutamyl-tRNA(Glu): step 1/2. Catalyzes the NADPH-dependent reduction of glutamyl-tRNA(Glu) to glutamate 1-semialdehyde (GSA). This chain is Glutamyl-tRNA reductase, found in Stenotrophomonas maltophilia (strain K279a).